The sequence spans 143 residues: Putative pre-16S rRNA nuclease (143 aa).

The protein belongs to the YqgF nuclease family.

Its subcellular location is the cytoplasm. Could be a nuclease involved in processing of the 5'-end of pre-16S rRNA. This chain is Putative pre-16S rRNA nuclease, found in Marinobacter nauticus (strain ATCC 700491 / DSM 11845 / VT8) (Marinobacter aquaeolei).